A 687-amino-acid polypeptide reads, in one-letter code: Protein SDA1 homolog (687 aa).

Residues S232, S234, and S236 each carry the phosphoserine modification. Positions 254 to 315 form a coiled coil; that stretch reads KKGSKNKKKL…SCKERFEVKM (62 aa). A disordered region spans residues 484-509; sequence LEKGENTEDDEDGWESASLSEEEEED. Residues 490–509 show a composition bias toward acidic residues; sequence TEDDEDGWESASLSEEEEED. Residue T552 is modified to Phosphothreonine. 3 positions are modified to phosphoserine: S585, S589, and S595. Residues 604–651 form a disordered region; it reads KKPKSDKETRLATAMAGRTDRKEFVRKKTKINPFSSSTNKEKKKQKNF.

The protein belongs to the SDA1 family.

Its subcellular location is the nucleus. It is found in the nucleolus. Functionally, required for 60S pre-ribosomal subunits export to the cytoplasm. The chain is Protein SDA1 homolog (Sdad1) from Mus musculus (Mouse).